The following is a 377-amino-acid chain: Succinyl-diaminopimelate desuccinylase (377 aa).

Histidine 67 lines the Zn(2+) pocket. Residue aspartate 69 is part of the active site. Aspartate 100 is a binding site for Zn(2+). Glutamate 134 acts as the Proton acceptor in catalysis. Zn(2+)-binding residues include glutamate 135, glutamate 163, and histidine 349.

It belongs to the peptidase M20A family. DapE subfamily. As to quaternary structure, homodimer. Zn(2+) is required as a cofactor. It depends on Co(2+) as a cofactor.

It carries out the reaction N-succinyl-(2S,6S)-2,6-diaminopimelate + H2O = (2S,6S)-2,6-diaminopimelate + succinate. It functions in the pathway amino-acid biosynthesis; L-lysine biosynthesis via DAP pathway; LL-2,6-diaminopimelate from (S)-tetrahydrodipicolinate (succinylase route): step 3/3. In terms of biological role, catalyzes the hydrolysis of N-succinyl-L,L-diaminopimelic acid (SDAP), forming succinate and LL-2,6-diaminopimelate (DAP), an intermediate involved in the bacterial biosynthesis of lysine and meso-diaminopimelic acid, an essential component of bacterial cell walls. This chain is Succinyl-diaminopimelate desuccinylase, found in Haemophilus influenzae (strain 86-028NP).